Consider the following 345-residue polypeptide: Ninja-family protein AFP1 (345 aa).

Disordered stretches follow at residues 114–185 (TSLP…ATAN) and 201–256 (QVSG…RRLS). 2 stretches are compositionally biased toward basic and acidic residues: residues 123 to 132 (EWRKRKEMQT) and 222 to 232 (LETKASSDEAR). Residues 235-249 (PSTTQPQQETTTKPT) show a composition bias toward low complexity.

Belongs to the Ninja family. In terms of assembly, forms a heterodimer with AFP2. Interacts with ABI5/DPBF1, DPBF2, AREB3/DPBF3, ABF1, ABF3/DPBF5 and ABF4/AREB2.

It is found in the nucleus. Its function is as follows. Acts as a negative regulator of abscisic acid (ABA) response during germination through the ubiquitin-mediated proteolysis of ABI5/DPBF1. The polypeptide is Ninja-family protein AFP1 (AFP1) (Arabidopsis thaliana (Mouse-ear cress)).